The primary structure comprises 854 residues: Armadillo repeat-containing protein 2 (854 aa).

3 disordered regions span residues 1 to 116 (MLSS…SFPK), 140 to 194 (QGML…PLLT), and 206 to 255 (EVSL…ETDT). Positions 58 to 73 (PASSRSPENRPPSSFS) are enriched in low complexity. Polar residues-rich tracts occupy residues 74–87 (LHAS…SKPI) and 162–187 (KPVS…TGQL). ARM repeat units follow at residues 255–294 (TEVD…RTLE), 298–337 (MLGK…ALKV), 356–396 (EKND…ALKF), 401–442 (PGFL…HLLV), 455–496 (PLTR…KLTS), 499–540 (DCCA…NLTA), 544–583 (QARE…EAKP), 585–605 (AEAE…AIHP), 606–649 (RIGP…NLSF), 651–692 (QVKS…NLSQ), 694–733 (HDVC…NLTV), and 735–777 (KEKR…NFSE).

Functionally, required for sperm flagellum axoneme organization and function. Involved in axonemal central pair complex assembly and/or stability. This is Armadillo repeat-containing protein 2 from Mus musculus (Mouse).